Reading from the N-terminus, the 399-residue chain is LEM domain-containing protein Bocksbeutel (399 aa).

Residues 4–48 (LSYLDTLGNKELLAKCLEHGLPGVPVTDSTRSVIIRRLKAKITGV) form the LEM domain. 3 disordered regions span residues 49 to 103 (PLNK…EQSR), 119 to 141 (SVQT…SYMV), and 233 to 287 (NSTS…SNLA). Polar residues-rich tracts occupy residues 68–77 (HGSQVTTPTS) and 89–99 (GRTSSNNNKIS). The span at 233-256 (NSTSYEESSTYNPKLSPISPRNTF) shows a compositional bias: polar residues. A helical membrane pass occupies residues 377-397 (FYLILVVSVMLATMVYVVLTP).

The protein resides in the nucleus inner membrane. It localises to the cytoplasm. It is found in the nucleus. Its subcellular location is the nucleoplasm. The protein localises to the endoplasmic reticulum. Functionally, inner nuclear membrane protein. May have a role in maintaining the structural integrity of the nuclear lamina. During pupal development, plays essential and redundant functions with the other LEM domain proteins; MAN1 and Ote. Also has a redundant but important role with Ote in larval development. This is LEM domain-containing protein Bocksbeutel from Drosophila melanogaster (Fruit fly).